Here is a 564-residue protein sequence, read N- to C-terminus: Phenylalanine--tRNA ligase beta subunit (564 aa).

The B5 domain maps to 286 to 362 (YFQNTLEVSV…IGRGLDSFKP (77 aa)). Residues Asp340, Asp346, Glu349, and Glu350 each contribute to the Mg(2+) site.

Belongs to the phenylalanyl-tRNA synthetase beta subunit family. Type 2 subfamily. Tetramer of two alpha and two beta subunits. Requires Mg(2+) as cofactor.

The protein resides in the cytoplasm. It carries out the reaction tRNA(Phe) + L-phenylalanine + ATP = L-phenylalanyl-tRNA(Phe) + AMP + diphosphate + H(+). This chain is Phenylalanine--tRNA ligase beta subunit, found in Borrelia hermsii (strain HS1 / DAH).